Reading from the N-terminus, the 202-residue chain is Ribonuclease HII (202 aa).

The 188-residue stretch at 15–202 (QGVAGVDEAG…APIKAFGISA (188 aa)) folds into the RNase H type-2 domain. A divalent metal cation-binding residues include Asp21, Glu22, and Asp113.

This sequence belongs to the RNase HII family. It depends on Mn(2+) as a cofactor. Mg(2+) is required as a cofactor.

The protein localises to the cytoplasm. The catalysed reaction is Endonucleolytic cleavage to 5'-phosphomonoester.. Functionally, endonuclease that specifically degrades the RNA of RNA-DNA hybrids. This chain is Ribonuclease HII, found in Bordetella avium (strain 197N).